A 619-amino-acid chain; its full sequence is Very-long-chain aldehyde decarbonylase GL1-4 (619 aa).

Transmembrane regions (helical) follow at residues 45 to 65 (IAFS…QIWI), 94 to 114 (GWDD…LAMP), 126 to 146 (GAVV…YWFH), 178 to 198 (FAEH…TIYL), and 325 to 345 (AWYM…AWIY). Positions 138 to 272 (VEFLYYWFHR…MPFYDYIYNT (135 aa)) constitute a Fatty acid hydroxylase domain.

Belongs to the sterol desaturase family. In terms of assembly, homodimer.

The protein localises to the endoplasmic reticulum membrane. It catalyses the reaction a long-chain fatty aldehyde + 2 NADPH + O2 + H(+) = a long-chain alkane + formate + 2 NADP(+) + H2O. In terms of biological role, aldehyde decarbonylase involved in the conversion of aldehydes to alkanes. Core component of a very-long-chain alkane synthesis complex. The sequence is that of Very-long-chain aldehyde decarbonylase GL1-4 from Oryza sativa subsp. indica (Rice).